The chain runs to 500 residues: NAD(P)H-quinone oxidoreductase chain 4, chloroplastic (500 aa).

14 helical membrane-spanning segments follow: residues 4 to 24, 37 to 57, 87 to 107, 113 to 130, 134 to 154, 167 to 187, 211 to 231, 242 to 262, 272 to 292, 305 to 325, 330 to 350, 386 to 406, 416 to 436, and 462 to 482; these read FPWLTIIVVFPISAGLSIFFL, ICICLLELLLMTYVFCYHFQL, IGPILLTGFITTLATLAAWPV, LFHFLMLAMYSGQIGLFS, LLLFFLMWELELIPVYLLLSM, FILYTAGGSVFLLMGVLGMGL, ILFYFGFLIAYAVKLPIIPLH, HYSTCMLLAGILLKMGAYGLV, AHSIFSPWLVLAGTLQIIYAA, IAYSSVSHMGFTIIGIGSITD, GAILQLLSHGFLGAALFFLAG, LALPGMSGFVAEAVVFFGIIT, ILITFVMAIGMILTPIYLLSM, and LFVSICIFLPVIGIGIYPDFV.

The protein belongs to the complex I subunit 4 family.

It localises to the plastid. The protein localises to the chloroplast thylakoid membrane. The enzyme catalyses a plastoquinone + NADH + (n+1) H(+)(in) = a plastoquinol + NAD(+) + n H(+)(out). It catalyses the reaction a plastoquinone + NADPH + (n+1) H(+)(in) = a plastoquinol + NADP(+) + n H(+)(out). The polypeptide is NAD(P)H-quinone oxidoreductase chain 4, chloroplastic (Acorus calamus var. americanus (American sweet flag)).